The following is a 368-amino-acid chain: C6 finger domain transcription factor tcpZ (368 aa).

The zn(2)-C6 fungal-type DNA-binding region spans 30-56; the sequence is CDACHASKVRCSGEPICARCQRDNVAC. Positions 84-109 are disordered; it reads FIEQRQRPAASQPPGHGTSRDSSVCA.

The protein resides in the nucleus. Its function is as follows. Transcription factor that specifically regulates the thioclapurine biosynthesis gene cluster. The chain is C6 finger domain transcription factor tcpZ from Claviceps purpurea (strain 20.1) (Ergot fungus).